A 2293-amino-acid chain; its full sequence is Protein Ycf2 (2293 aa).

Residue 1647 to 1654 (GSIGTGRS) participates in ATP binding.

The protein belongs to the Ycf2 family.

It is found in the plastid. The protein localises to the chloroplast stroma. Its function is as follows. Probable ATPase of unknown function. Its presence in a non-photosynthetic plant (Epifagus virginiana) and experiments in tobacco indicate that it has an essential function which is probably not related to photosynthesis. The polypeptide is Protein Ycf2 (Lobularia maritima (Sweet alyssum)).